The primary structure comprises 459 residues: Cysteine--tRNA ligase (459 aa).

Cys-31 contacts Zn(2+). A 'HIGH' region motif is present at residues 33–43; that stretch reads PTVYYNPHIGN. Residues Cys-216, His-241, and Glu-245 each coordinate Zn(2+). The 'KMSKS' region motif lies at 274–278; sequence KMSKS. Lys-277 provides a ligand contact to ATP.

It belongs to the class-I aminoacyl-tRNA synthetase family. As to quaternary structure, monomer. The cofactor is Zn(2+).

The protein resides in the cytoplasm. It catalyses the reaction tRNA(Cys) + L-cysteine + ATP = L-cysteinyl-tRNA(Cys) + AMP + diphosphate. The sequence is that of Cysteine--tRNA ligase from Rickettsia rickettsii (strain Iowa).